An 86-amino-acid polypeptide reads, in one-letter code: U15-lycotoxin-Ls1d (86 aa).

Positions 1-20 (MNSKIFAVLLLLAFLSCVLS) are cleaved as a signal peptide. The region spanning 21 to 66 (DQYCPKSSITACKKMNIRNDCCKDDDCTGGSWCCATPCGNFCKYPT) is the WAP domain. 5 disulfides stabilise this stretch: Cys-24–Cys-54, Cys-32–Cys-58, Cys-41–Cys-53, Cys-42–Cys-80, and Cys-47–Cys-62.

It belongs to the venom protein 11 family. 01 (wap-1) subfamily. Contains 5 disulfide bonds. Expressed by the venom gland.

The protein localises to the secreted. Functionally, has antibacterial activity. This is U15-lycotoxin-Ls1d from Lycosa singoriensis (Wolf spider).